A 207-amino-acid chain; its full sequence is Ras-related protein RABH1e (207 aa).

16–23 is a GTP binding site; sequence GDQSVGKT. Residues 38-46 carry the Effector region motif; it reads YQATIGIDF. GTP contacts are provided by residues 64–68, 122–125, and 152–153; these read DTAGQ, NKTD, and SA. S-geranylgeranyl cysteine attachment occurs at residues C205 and C207. Cysteine methyl ester is present on C207.

It belongs to the small GTPase superfamily. Rab family.

It is found in the golgi apparatus membrane. In terms of biological role, protein transport. Regulator of membrane traffic from the Golgi apparatus towards the endoplasmic reticulum (ER). The sequence is that of Ras-related protein RABH1e (RABH1E) from Arabidopsis thaliana (Mouse-ear cress).